We begin with the raw amino-acid sequence, 306 residues long: Oxygen-dependent coproporphyrinogen-III oxidase (306 aa).

Ser94 is a binding site for substrate. A divalent metal cation contacts are provided by His98 and His108. His108 acts as the Proton donor in catalysis. Residue 110–112 (NVR) coordinates substrate. Residues His147 and His177 each coordinate a divalent metal cation. The tract at residues 242-277 (YVEFNLVYDRGTLFGLQTGGRTESILMSMPPLVRWE) is important for dimerization. A substrate-binding site is contributed by 260–262 (GGR).

Belongs to the aerobic coproporphyrinogen-III oxidase family. Homodimer. A divalent metal cation serves as cofactor.

It is found in the cytoplasm. The enzyme catalyses coproporphyrinogen III + O2 + 2 H(+) = protoporphyrinogen IX + 2 CO2 + 2 H2O. The protein operates within porphyrin-containing compound metabolism; protoporphyrin-IX biosynthesis; protoporphyrinogen-IX from coproporphyrinogen-III (O2 route): step 1/1. Functionally, involved in the heme biosynthesis. Catalyzes the aerobic oxidative decarboxylation of propionate groups of rings A and B of coproporphyrinogen-III to yield the vinyl groups in protoporphyrinogen-IX. This is Oxygen-dependent coproporphyrinogen-III oxidase from Shewanella woodyi (strain ATCC 51908 / MS32).